Here is a 539-residue protein sequence, read N- to C-terminus: O-phosphoserine--tRNA(Cys) ligase (539 aa).

Substrate is bound by residues 188–190 (HMT), 233–235 (SAS), 275–276 (YY), and N319.

It belongs to the class-II aminoacyl-tRNA synthetase family. O-phosphoseryl-tRNA(Cys) synthetase subfamily. As to quaternary structure, homotetramer. Interacts with SepCysS.

The catalysed reaction is tRNA(Cys) + O-phospho-L-serine + ATP = O-phospho-L-seryl-tRNA(Cys) + AMP + diphosphate. Functionally, catalyzes the attachment of O-phosphoserine (Sep) to tRNA(Cys). In Methanocaldococcus jannaschii (strain ATCC 43067 / DSM 2661 / JAL-1 / JCM 10045 / NBRC 100440) (Methanococcus jannaschii), this protein is O-phosphoserine--tRNA(Cys) ligase (sepS).